The following is a 421-amino-acid chain: MYQKIKGTEDLYGDEMKYWYWIEKKAKDLAIRYGYGEIRTPIFEETKLFIRSVGQDTDIVQKEMYTFEDKGGRSITLRPEGTAPVVRAFVEDGMIAQGFPQKYFYIGPMFRYERPQSGRQRQFHQFGAEIFGSSSAIADAELIIFADRLMKEIGLVDYQIHINSLGDIEDRVKYREALKEYYAQHLENLCDDCKVRYEKNVLRLLDCKVDIEYTKNAPKITDYLGENSRKHYEELKALLDSVGIKYIENPRLVRGLDYYNRTVFEIHHQKLGAMSAIAGGGRYDGLIKEIGGKDVPALGFATGIERLILALKAENVLVDEIETNVVYIAYLGGFDVKAEAIRLSEELRREGIPVGLELMERGLSAQLKNAARVGAKFTIIVGESELERNIVLVKNMETGEQLEFERSFVVSGIKDMITEMQ.

This sequence belongs to the class-II aminoacyl-tRNA synthetase family. Homodimer.

It is found in the cytoplasm. The enzyme catalyses tRNA(His) + L-histidine + ATP = L-histidyl-tRNA(His) + AMP + diphosphate + H(+). The chain is Histidine--tRNA ligase from Fervidobacterium nodosum (strain ATCC 35602 / DSM 5306 / Rt17-B1).